The primary structure comprises 151 residues: Ribosome maturation factor RimP (151 aa).

The protein belongs to the RimP family.

It is found in the cytoplasm. Functionally, required for maturation of 30S ribosomal subunits. This Shewanella woodyi (strain ATCC 51908 / MS32) protein is Ribosome maturation factor RimP.